A 78-amino-acid chain; its full sequence is Exodeoxyribonuclease 7 small subunit (78 aa).

This sequence belongs to the XseB family. Heterooligomer composed of large and small subunits.

The protein localises to the cytoplasm. The enzyme catalyses Exonucleolytic cleavage in either 5'- to 3'- or 3'- to 5'-direction to yield nucleoside 5'-phosphates.. Bidirectionally degrades single-stranded DNA into large acid-insoluble oligonucleotides, which are then degraded further into small acid-soluble oligonucleotides. This is Exodeoxyribonuclease 7 small subunit from Paracoccus zeaxanthinifaciens.